The following is a 543-amino-acid chain: uncharacterized protein (543 aa).

In terms of domain architecture, TRAM spans 1–59 (MLKKNDIVEVEIVDLTHEGAGVAKVDGLVFFVENALPSEKILMRVLKVNKKIGFGKVEK). Positions 283, 312, 333, and 381 each coordinate S-adenosyl-L-methionine. C408 acts as the Nucleophile in catalysis.

The protein belongs to the class I-like SAM-binding methyltransferase superfamily. RNA M5U methyltransferase family.

This is an uncharacterized protein from Streptococcus pneumoniae serotype 4 (strain ATCC BAA-334 / TIGR4).